A 132-amino-acid chain; its full sequence is Amicyanin (132 aa).

The first 26 residues, 1–26 (MISAKTLRPAIAAIALFAIGATGAWA), serve as a signal peptide directing secretion. The residue at position 27 (glutamine 27) is a Pyrrolidone carboxylic acid. The region spanning 27–132 (QDKITVTSEK…PFMRGKVIVE (106 aa)) is the Plastocyanin-like domain. Residues histidine 80, cysteine 119, histidine 122, and methionine 125 each coordinate Cu cation.

It depends on Cu cation as a cofactor.

It localises to the periplasm. It participates in one-carbon metabolism; methylamine degradation. Primary acceptor of electrons from methylamine dehydrogenase. Passes those electrons on either a soluble cytochrome c or to pseudoazurin. The protein is Amicyanin (mauC) of Paracoccus versutus (Thiobacillus versutus).